The primary structure comprises 267 residues: 4-hydroxy-tetrahydrodipicolinate reductase (267 aa).

Residues 8–13 and Glu-34 contribute to the NAD(+) site; that span reads GAAGRM. NADP(+) is bound at residue Arg-35. NAD(+)-binding positions include 98–100 and 122–125; these read GST and APNM. Catalysis depends on His-155, which acts as the Proton donor/acceptor. Residue His-156 participates in (S)-2,3,4,5-tetrahydrodipicolinate binding. Lys-159 acts as the Proton donor in catalysis. A (S)-2,3,4,5-tetrahydrodipicolinate-binding site is contributed by 165–166; the sequence is GT.

This sequence belongs to the DapB family.

It localises to the cytoplasm. The enzyme catalyses (S)-2,3,4,5-tetrahydrodipicolinate + NAD(+) + H2O = (2S,4S)-4-hydroxy-2,3,4,5-tetrahydrodipicolinate + NADH + H(+). The catalysed reaction is (S)-2,3,4,5-tetrahydrodipicolinate + NADP(+) + H2O = (2S,4S)-4-hydroxy-2,3,4,5-tetrahydrodipicolinate + NADPH + H(+). Its pathway is amino-acid biosynthesis; L-lysine biosynthesis via DAP pathway; (S)-tetrahydrodipicolinate from L-aspartate: step 4/4. Catalyzes the conversion of 4-hydroxy-tetrahydrodipicolinate (HTPA) to tetrahydrodipicolinate. The sequence is that of 4-hydroxy-tetrahydrodipicolinate reductase from Pelobacter propionicus (strain DSM 2379 / NBRC 103807 / OttBd1).